We begin with the raw amino-acid sequence, 383 residues long: S-(hydroxymethyl)glutathione dehydrogenase (383 aa).

Position 51 (C51) interacts with Zn(2+). H52 is a binding site for NAD(+). 7 residues coordinate Zn(2+): H73, E74, C103, C106, C109, C117, and C180. NAD(+) contacts are provided by residues 205 to 210 (GAGCVG), D229, and 298 to 300 (IGV).

This sequence belongs to the zinc-containing alcohol dehydrogenase family. Class-III subfamily. It depends on Zn(2+) as a cofactor.

It catalyses the reaction a primary alcohol + NAD(+) = an aldehyde + NADH + H(+). It carries out the reaction a secondary alcohol + NAD(+) = a ketone + NADH + H(+). The enzyme catalyses S-(hydroxymethyl)glutathione + NADP(+) = S-formylglutathione + NADPH + H(+). The catalysed reaction is S-(hydroxymethyl)glutathione + NAD(+) = S-formylglutathione + NADH + H(+). It catalyses the reaction S-nitrosoglutathione + NADH + H(+) = S-(hydroxysulfenamide)glutathione + NAD(+). Functionally, oxidizes long-chain alcohols and, in the presence of glutathione, is able to oxidize formaldehyde. Also acts as a S-nitroso-glutathione reductase by catalyzing the NADH-dependent reduction of S-nitrosoglutathione, thereby regulating protein S-nitrosylation. This Aspergillus oryzae (strain ATCC 42149 / RIB 40) (Yellow koji mold) protein is S-(hydroxymethyl)glutathione dehydrogenase (FDH1).